The primary structure comprises 2224 residues: Protein sidekick (2224 aa).

The N-terminal stretch at 1–47 (MLKSAASSLRRRRPKTTITATLAIEMPSQPKLASLLAVLVLLCYCDS) is a signal peptide. The Extracellular segment spans residues 48 to 2001 (CFFCYADANL…LQHKPFYRQT (1954 aa)). The region spanning 72-155 (PRFTTHPSSS…SIFSEKSDVV (84 aa)) is the Ig-like C2-type 1 domain. A disulfide bond links cysteine 95 and cysteine 138. Residues asparagine 164, asparagine 250, asparagine 318, and asparagine 327 are each glycosylated (N-linked (GlcNAc...) asparagine). Ig-like C2-type domains are found at residues 261-355 (PEII…ARLQ), 359-445 (PPLF…NSAS), 455-541 (PIME…AYLS), and 546-636 (TQII…ARLS). Disulfide bonds link cysteine 283/cysteine 336 and cysteine 382/cysteine 433. Residues asparagine 463, asparagine 485, and asparagine 491 are each glycosylated (N-linked (GlcNAc...) asparagine). 2 disulfides stabilise this stretch: cysteine 476-cysteine 525 and cysteine 567-cysteine 620. N-linked (GlcNAc...) asparagine glycosylation is found at asparagine 628, asparagine 661, asparagine 707, asparagine 809, asparagine 870, asparagine 942, asparagine 1019, asparagine 1094, asparagine 1109, asparagine 1172, asparagine 1203, asparagine 1282, asparagine 1329, asparagine 1379, asparagine 1414, and asparagine 1420. 13 consecutive Fibronectin type-III domains span residues 643–753 (PPSN…LPQE), 758–855 (PPVG…TKEG), 860–967 (PPTN…TMDD), 971–1065 (EVTG…VEPV), 1069–1164 (APTA…TIQA), 1169–1270 (PPFN…TREA), 1275–1372 (GPLD…TFED), 1376–1469 (VPSN…TNNR), 1474–1570 (APSV…TLPA), 1575–1677 (GVGG…VGEA), 1682–1785 (EPRA…TLPG), 1789–1883 (APLH…GPQD), and 1885–1984 (SPVA…TPSK). N-linked (GlcNAc...) asparagine glycans are attached at residues asparagine 1843 and asparagine 1876. The chain crosses the membrane as a helical span at residues 2002–2022 (WFMVSLAATSIVIIVMVIAVL). Over 2023–2224 (CVKSKSYKYK…APLPGFSSFV (202 aa)) the chain is Cytoplasmic. Disordered regions lie at residues 2068 to 2157 (TLNS…RSDP) and 2171 to 2195 (LRQS…PEGS). A Phosphoserine modification is found at serine 2071. The span at 2073–2085 (GTLRSGTLGTLGR) shows a compositional bias: low complexity. The residue at position 2074 (threonine 2074) is a Phosphothreonine. Basic and acidic residues-rich tracts occupy residues 2112 to 2122 (HSDEESLKCYD) and 2144 to 2157 (QHSE…RSDP). A phosphoserine mark is found at serine 2113 and serine 2117.

This sequence belongs to the sidekick family.

The protein localises to the membrane. In terms of biological role, participates in homotypic or heterotypic interactions in the eye during pattern formation to prevent extra cells from joining the precluster and differentiating as photoreceptor cells. The polypeptide is Protein sidekick (Drosophila melanogaster (Fruit fly)).